Consider the following 210-residue polypeptide: Small ribosomal subunit protein uS4 (210 aa).

A disordered region spans residues 30-49 (EKSSLEKRKYPPGLPPKKKG). The 64-residue stretch at 99 to 162 (RRLDNVLYRM…QKSAFIEENI (64 aa)) folds into the S4 RNA-binding domain.

It belongs to the universal ribosomal protein uS4 family. As to quaternary structure, part of the 30S ribosomal subunit. Contacts protein S5. The interaction surface between S4 and S5 is involved in control of translational fidelity.

Functionally, one of the primary rRNA binding proteins, it binds directly to 16S rRNA where it nucleates assembly of the body of the 30S subunit. In terms of biological role, with S5 and S12 plays an important role in translational accuracy. The polypeptide is Small ribosomal subunit protein uS4 (Leptospira biflexa serovar Patoc (strain Patoc 1 / Ames)).